We begin with the raw amino-acid sequence, 742 residues long: Probable LRR receptor-like serine/threonine-protein kinase At2g02780 (742 aa).

The first 25 residues, 1 to 25, serve as a signal peptide directing secretion; that stretch reads MQISLQIHLSSFTFLLLIFLLPVLS. The Extracellular portion of the chain corresponds to 26-354; it reads ESQVASSESQ…KDSARIKLGL (329 aa). LRR repeat units lie at residues 74 to 96, 104 to 128, 130 to 154, 156 to 177, 178 to 204, 206 to 223, 224 to 247, 249 to 271, and 273 to 294; these read HGHV…SFHK, LSSL…IITK, SPSL…IVSL, NLKS…DLRG, LSNL…KLTT, SLKN…IKKL, NNLQ…LFSI, SLQI…SCTS, and KIIT…CYSS. Asn85 carries an N-linked (GlcNAc...) asparagine glycan. N-linked (GlcNAc...) asparagine glycosylation is present at Asn137. Asn209 carries an N-linked (GlcNAc...) asparagine glycan. Asn266 carries N-linked (GlcNAc...) asparagine glycosylation. Asn299 carries an N-linked (GlcNAc...) asparagine glycan. The chain crosses the membrane as a helical span at residues 355-375; the sequence is VILIIIGVIILAAILVLLVLI. The Cytoplasmic portion of the chain corresponds to 376 to 742; it reads ALKRRRSRSE…HESSMKAIYE (367 aa). The disordered stretch occupies residues 386 to 424; it reads DDPFEVNNSNNERHASDKVSVCSTTTASSKSLPDSRRVP. Over residues 406 to 417 the composition is skewed to polar residues; the sequence is VCSTTTASSKSL. In terms of domain architecture, Protein kinase spans 426–720; that stretch reads TMRSAVIGLP…DVVWNLQYTI (295 aa).

The protein belongs to the protein kinase superfamily. Ser/Thr protein kinase family.

Its subcellular location is the membrane. The enzyme catalyses L-seryl-[protein] + ATP = O-phospho-L-seryl-[protein] + ADP + H(+). It catalyses the reaction L-threonyl-[protein] + ATP = O-phospho-L-threonyl-[protein] + ADP + H(+). The sequence is that of Probable LRR receptor-like serine/threonine-protein kinase At2g02780 from Arabidopsis thaliana (Mouse-ear cress).